A 169-amino-acid polypeptide reads, in one-letter code: 2-C-methyl-D-erythritol 2,4-cyclodiphosphate synthase (169 aa).

A divalent metal cation contacts are provided by Asp-13 and His-15. Residues 13–15 (DIH) and 40–41 (HS) contribute to the 4-CDP-2-C-methyl-D-erythritol 2-phosphate site. Residue His-48 participates in a divalent metal cation binding. 4-CDP-2-C-methyl-D-erythritol 2-phosphate contacts are provided by residues 62–64 (DIG), 138–141 (TTNE), and Arg-148.

This sequence belongs to the IspF family. As to quaternary structure, homotrimer. A divalent metal cation is required as a cofactor.

The enzyme catalyses 4-CDP-2-C-methyl-D-erythritol 2-phosphate = 2-C-methyl-D-erythritol 2,4-cyclic diphosphate + CMP. The protein operates within isoprenoid biosynthesis; isopentenyl diphosphate biosynthesis via DXP pathway; isopentenyl diphosphate from 1-deoxy-D-xylulose 5-phosphate: step 4/6. In terms of biological role, involved in the biosynthesis of isopentenyl diphosphate (IPP) and dimethylallyl diphosphate (DMAPP), two major building blocks of isoprenoid compounds. Catalyzes the conversion of 4-diphosphocytidyl-2-C-methyl-D-erythritol 2-phosphate (CDP-ME2P) to 2-C-methyl-D-erythritol 2,4-cyclodiphosphate (ME-CPP) with a corresponding release of cytidine 5-monophosphate (CMP). This chain is 2-C-methyl-D-erythritol 2,4-cyclodiphosphate synthase, found in Akkermansia muciniphila (strain ATCC BAA-835 / DSM 22959 / JCM 33894 / BCRC 81048 / CCUG 64013 / CIP 107961 / Muc).